The sequence spans 295 residues: Small ribosomal subunit protein uS2 (295 aa).

Residues 263–295 (KKFSKTKNIDEETNTEFEQALNDADENKNSDNA) are disordered.

Belongs to the universal ribosomal protein uS2 family.

This chain is Small ribosomal subunit protein uS2, found in Rickettsia massiliae (strain Mtu5).